Here is a 254-residue protein sequence, read N- to C-terminus: Phosphoribosylaminoimidazole-succinocarboxamide synthase (254 aa).

The protein belongs to the SAICAR synthetase family.

The enzyme catalyses 5-amino-1-(5-phospho-D-ribosyl)imidazole-4-carboxylate + L-aspartate + ATP = (2S)-2-[5-amino-1-(5-phospho-beta-D-ribosyl)imidazole-4-carboxamido]succinate + ADP + phosphate + 2 H(+). It functions in the pathway purine metabolism; IMP biosynthesis via de novo pathway; 5-amino-1-(5-phospho-D-ribosyl)imidazole-4-carboxamide from 5-amino-1-(5-phospho-D-ribosyl)imidazole-4-carboxylate: step 1/2. The chain is Phosphoribosylaminoimidazole-succinocarboxamide synthase from Bartonella tribocorum (strain CIP 105476 / IBS 506).